The chain runs to 129 residues: Cytochrome c-type protein SHP (129 aa).

A signal peptide spans 1–17; sequence MTRFLILSAVLAGPALA. 3 residues coordinate heme c: Cys-60, Cys-63, and His-64. The cysteines at positions 106 and 114 are disulfide-linked.

Binds 1 heme c group covalently per subunit.

Functionally, high-spin cytochrome. Transiently bind oxygen during autoxidation, which occurs with a half-life of 3 minutes with a 4-fold excess of O(2). Also binds carbon monoxide, azide and cyanide. In Cereibacter sphaeroides (strain ATCC 17023 / DSM 158 / JCM 6121 / CCUG 31486 / LMG 2827 / NBRC 12203 / NCIMB 8253 / ATH 2.4.1.) (Rhodobacter sphaeroides), this protein is Cytochrome c-type protein SHP (shp).